The following is a 175-amino-acid chain: Large ribosomal subunit protein uL6 (175 aa).

This sequence belongs to the universal ribosomal protein uL6 family. As to quaternary structure, part of the 50S ribosomal subunit.

Functionally, this protein binds to the 23S rRNA, and is important in its secondary structure. It is located near the subunit interface in the base of the L7/L12 stalk, and near the tRNA binding site of the peptidyltransferase center. The polypeptide is Large ribosomal subunit protein uL6 (Xylella fastidiosa (strain 9a5c)).